The chain runs to 804 residues: Phosphatidylinositol 4-kinase beta (804 aa).

Residues 55 to 245 (LEKVKMIHGS…GTKLRKLILS (191 aa)) enclose the PIK helical domain. 2 disordered regions span residues 69-122 (LDKV…ARRR) and 251-309 (AHKK…EPVR). Polar residues-rich tracts occupy residues 91–103 (KLTN…TSSR) and 281–300 (DATV…SNPK). The 267-residue stretch at 523–789 (EPWEEKVRRI…MVDGSMRSIT (267 aa)) folds into the PI3K/PI4K catalytic domain. The segment at 529 to 535 (VRRIREG) is G-loop. A catalytic loop region spans residues 656-664 (QVKDRHNGN). The interval 675-699 (HIDFGFILSSSPRNLGFETSAFKLT) is activation loop.

The protein belongs to the PI3/PI4-kinase family. Type III PI4K subfamily. Requires Mg(2+) as cofactor. Mn(2+) serves as cofactor.

It is found in the endomembrane system. The protein resides in the mitochondrion outer membrane. The protein localises to the rough endoplasmic reticulum membrane. The catalysed reaction is a 1,2-diacyl-sn-glycero-3-phospho-(1D-myo-inositol) + ATP = a 1,2-diacyl-sn-glycero-3-phospho-(1D-myo-inositol 4-phosphate) + ADP + H(+). In terms of biological role, phosphorylates phosphatidylinositol (PI) in the first committed step in the production of the second messenger inositol-1,4,5,-trisphosphate (PIP). May play an important role in the inner ear development. This Xenopus laevis (African clawed frog) protein is Phosphatidylinositol 4-kinase beta (pi4kb).